A 214-amino-acid chain; its full sequence is A-type ATP synthase subunit D (214 aa).

Belongs to the V-ATPase D subunit family. In terms of assembly, has multiple subunits with at least A(3), B(3), C, D, E, F, H, I and proteolipid K(x).

The protein localises to the cell membrane. Functionally, component of the A-type ATP synthase that produces ATP from ADP in the presence of a proton gradient across the membrane. The sequence is that of A-type ATP synthase subunit D from Desulfurococcus sp. (strain SY).